We begin with the raw amino-acid sequence, 646 residues long: ATP-dependent rRNA helicase SPB4 (646 aa).

The Q motif signature appears at 15 to 43 (WGALTPSLAPWILDYLSSMGFEQPTPVQK). The 202-residue stretch at 46 to 247 (FDIFRGNKDV…TVGLLYPHKI (202 aa)) folds into the Helicase ATP-binding domain. 59–66 (AVTGSGKT) contributes to the ATP binding site. The short motif at 195 to 198 (DEAD) is the DEAD box element. A Helicase C-terminal domain is found at 284 to 434 (ALCQLLERLE…PLAKPPVSVT (151 aa)). 2 stretches are compositionally biased toward basic and acidic residues: residues 539-548 (KKEKAAREAQ) and 566-581 (NEAW…VKAA). Residues 539–646 (KKEKAAREAQ…GGDEFEGFDD (108 aa)) form a disordered region. Residues 572 to 623 (KHEHEDVKAARREKKRRKREAQRLGDMTEPEREEQRKLDEMIAEVRRRNAEA) adopt a coiled-coil conformation. Positions 582 to 591 (RREKKRRKRE) are enriched in basic residues. Residues 600 to 621 (EPEREEQRKLDEMIAEVRRRNA) are compositionally biased toward basic and acidic residues. The segment covering 622–631 (EAPTPAAQAA) has biased composition (low complexity).

It belongs to the DEAD box helicase family. DDX55/SPB4 subfamily. As to quaternary structure, component of pre-60S ribosomal complexes.

It localises to the nucleus. The protein resides in the nucleolus. The catalysed reaction is ATP + H2O = ADP + phosphate + H(+). Its function is as follows. ATP-binding RNA helicase involved in the biogenesis of 60S ribosomal subunits. Binds 90S pre-ribosomal particles and dissociates from pre-60S ribosomal particles after processing of 27SB pre-rRNA. Required for the normal formation of 18S rRNA through the processing of pre-rRNAs at sites A0, A1 and A2, and the normal formation of 25S and 5.8S rRNAs through the processing of pre-rRNAs at sites C1 and C2. The chain is ATP-dependent rRNA helicase SPB4 from Chaetomium globosum (strain ATCC 6205 / CBS 148.51 / DSM 1962 / NBRC 6347 / NRRL 1970) (Soil fungus).